We begin with the raw amino-acid sequence, 325 residues long: Acetyl-coenzyme A carboxylase carboxyl transferase subunit alpha (325 aa).

The CoA carboxyltransferase C-terminal domain maps to 35–292 (EINKLEARLE…DDVLKRSLRE (258 aa)).

This sequence belongs to the AccA family. Acetyl-CoA carboxylase is a heterohexamer composed of biotin carboxyl carrier protein (AccB), biotin carboxylase (AccC) and two subunits each of ACCase subunit alpha (AccA) and ACCase subunit beta (AccD).

Its subcellular location is the cytoplasm. It catalyses the reaction N(6)-carboxybiotinyl-L-lysyl-[protein] + acetyl-CoA = N(6)-biotinyl-L-lysyl-[protein] + malonyl-CoA. The protein operates within lipid metabolism; malonyl-CoA biosynthesis; malonyl-CoA from acetyl-CoA: step 1/1. Its function is as follows. Component of the acetyl coenzyme A carboxylase (ACC) complex. First, biotin carboxylase catalyzes the carboxylation of biotin on its carrier protein (BCCP) and then the CO(2) group is transferred by the carboxyltransferase to acetyl-CoA to form malonyl-CoA. The polypeptide is Acetyl-coenzyme A carboxylase carboxyl transferase subunit alpha (Anoxybacillus flavithermus (strain DSM 21510 / WK1)).